A 235-amino-acid polypeptide reads, in one-letter code: tRNA1(Val) (adenine(37)-N6)-methyltransferase (235 aa).

It belongs to the methyltransferase superfamily. tRNA (adenine-N(6)-)-methyltransferase family.

It is found in the cytoplasm. The catalysed reaction is adenosine(37) in tRNA1(Val) + S-adenosyl-L-methionine = N(6)-methyladenosine(37) in tRNA1(Val) + S-adenosyl-L-homocysteine + H(+). In terms of biological role, specifically methylates the adenine in position 37 of tRNA(1)(Val) (anticodon cmo5UAC). The polypeptide is tRNA1(Val) (adenine(37)-N6)-methyltransferase (Glaesserella parasuis serovar 5 (strain SH0165) (Haemophilus parasuis)).